The chain runs to 396 residues: 1-deoxy-D-xylulose 5-phosphate reductoisomerase (396 aa).

NADPH-binding residues include threonine 17, glycine 18, serine 19, isoleucine 20, asparagine 47, and asparagine 130. Lysine 131 provides a ligand contact to 1-deoxy-D-xylulose 5-phosphate. Glutamate 132 contacts NADPH. Aspartate 156 is a Mn(2+) binding site. 1-deoxy-D-xylulose 5-phosphate contacts are provided by serine 157, glutamate 158, serine 182, and histidine 205. Glutamate 158 is a binding site for Mn(2+). Position 211 (glycine 211) interacts with NADPH. Residues serine 218, asparagine 223, lysine 224, and glutamate 227 each coordinate 1-deoxy-D-xylulose 5-phosphate. Residue glutamate 227 coordinates Mn(2+).

It belongs to the DXR family. Mg(2+) is required as a cofactor. It depends on Mn(2+) as a cofactor.

The enzyme catalyses 2-C-methyl-D-erythritol 4-phosphate + NADP(+) = 1-deoxy-D-xylulose 5-phosphate + NADPH + H(+). The protein operates within isoprenoid biosynthesis; isopentenyl diphosphate biosynthesis via DXP pathway; isopentenyl diphosphate from 1-deoxy-D-xylulose 5-phosphate: step 1/6. Catalyzes the NADPH-dependent rearrangement and reduction of 1-deoxy-D-xylulose-5-phosphate (DXP) to 2-C-methyl-D-erythritol 4-phosphate (MEP). In Rhizobium etli (strain CIAT 652), this protein is 1-deoxy-D-xylulose 5-phosphate reductoisomerase.